Here is a 350-residue protein sequence, read N- to C-terminus: tRNA dimethylallyltransferase (350 aa).

The interval 1-20 (MMNTERPAGPLRPPHPPHPP) is disordered. The segment covering 10 to 20 (PLRPPHPPHPP) has biased composition (pro residues). 27 to 34 (GPTASGKT) serves as a coordination point for ATP. 29 to 34 (TASGKT) contacts substrate. 3 interaction with substrate tRNA regions span residues 52–55 (DSAL), 176–180 (QRIAR), and 273–278 (RCVGYR).

The protein belongs to the IPP transferase family. Monomer. Requires Mg(2+) as cofactor.

The catalysed reaction is adenosine(37) in tRNA + dimethylallyl diphosphate = N(6)-dimethylallyladenosine(37) in tRNA + diphosphate. Functionally, catalyzes the transfer of a dimethylallyl group onto the adenine at position 37 in tRNAs that read codons beginning with uridine, leading to the formation of N6-(dimethylallyl)adenosine (i(6)A). This chain is tRNA dimethylallyltransferase, found in Albidiferax ferrireducens (strain ATCC BAA-621 / DSM 15236 / T118) (Rhodoferax ferrireducens).